A 293-amino-acid polypeptide reads, in one-letter code: GTPase Era (293 aa).

In terms of domain architecture, Era-type G spans 2–168 (KILFSTIIGR…INEIKKYSYE (167 aa)). Positions 10 to 17 (GRPNVGKS) are G1. 10–17 (GRPNVGKS) lines the GTP pocket. The segment at 36 to 40 (QATRD) is G2. The segment at 57–60 (DTPG) is G3. GTP-binding positions include 57-61 (DTPGI) and 118-121 (TKID). Residues 118–121 (TKID) form a G4 region. The G5 stretch occupies residues 147 to 149 (ISS). The region spanning 199–279 (LEQELPHSIL…KLFLKIKVKK (81 aa)) is the KH type-2 domain.

This sequence belongs to the TRAFAC class TrmE-Era-EngA-EngB-Septin-like GTPase superfamily. Era GTPase family. Monomer.

It is found in the cytoplasm. It localises to the cell membrane. Functionally, an essential GTPase that binds both GDP and GTP, with rapid nucleotide exchange. Plays a role in 16S rRNA processing and 30S ribosomal subunit biogenesis and possibly also in cell cycle regulation and energy metabolism. This Mycoplasmopsis pulmonis (strain UAB CTIP) (Mycoplasma pulmonis) protein is GTPase Era.